The chain runs to 85 residues: Cell division protein ZapA (85 aa).

The stretch at 60–85 (AVNVVHDYLKLKEELERLKGQIKEKD) forms a coiled coil.

Belongs to the ZapA family. Type 2 subfamily. In terms of assembly, homodimer. Interacts with FtsZ.

It localises to the cytoplasm. Activator of cell division through the inhibition of FtsZ GTPase activity, therefore promoting FtsZ assembly into bundles of protofilaments necessary for the formation of the division Z ring. It is recruited early at mid-cell but it is not essential for cell division. The polypeptide is Cell division protein ZapA (Bacillus licheniformis (strain ATCC 14580 / DSM 13 / JCM 2505 / CCUG 7422 / NBRC 12200 / NCIMB 9375 / NCTC 10341 / NRRL NRS-1264 / Gibson 46)).